A 182-amino-acid chain; its full sequence is Cbp/p300-interacting transactivator 4 (182 aa).

Residues 22–129 (GPHAPRTLQP…PPPPPPALGC (108 aa)) are disordered. The segment covering 64 to 89 (SPVSFQPFPVSQSPGAGSTHLQSAAT) has biased composition (polar residues). The span at 100–117 (AAAGGPSPLQPAPGAAAS) shows a compositional bias: low complexity.

Belongs to the CITED family. As to quaternary structure, interacts via its C-terminal region with the CH1 domain of CREBBP and EP300. Interacts with all TFAP2/AP-2 isoforms. As to expression, strongly expressed in heart, spleen and testis, and weakly in liver and kidney.

Its subcellular location is the nucleus. The protein resides in the cytoplasm. Its function is as follows. Acts as a transcriptional coactivator for TFAP2/AP-2. Enhances estrogen-dependent transactivation mediated by estrogen receptors. May function as an inhibitor of transactivation by HIF1A by disrupting HIF1A interaction with CREBBP. May be involved in regulation of gene expression during development and differentiation of blood cells, endothelial cells and mammary epithelial cells. This Mus musculus (Mouse) protein is Cbp/p300-interacting transactivator 4.